A 93-amino-acid polypeptide reads, in one-letter code: Small ribosomal subunit protein uS19 (93 aa).

The protein belongs to the universal ribosomal protein uS19 family.

Protein S19 forms a complex with S13 that binds strongly to the 16S ribosomal RNA. The protein is Small ribosomal subunit protein uS19 of Oleidesulfovibrio alaskensis (strain ATCC BAA-1058 / DSM 17464 / G20) (Desulfovibrio alaskensis).